The sequence spans 703 residues: Harmonin-binding protein USHBP1 (703 aa).

A compositionally biased stretch (basic residues) spans 1-15 (MSARATRPRSRRGRH). 2 disordered regions span residues 1–113 (MSAR…PPGN) and 138–172 (HQPP…CQRE). A coiled-coil region spans residues 189–227 (SREDELVRTQASLEAIRAEKETLQKEVQELQDSLLRLEP). The disordered stretch occupies residues 228-256 (CPHLSHNQAGGSGSGSSSSEADREPWETQ). Residues 289 to 309 (EMHIMEAQMEQLRGSIEKLKC) are a coiled coil. A disordered region spans residues 396-416 (MDAGAQQNPQPSPEGSSVDKP). A compositionally biased stretch (polar residues) spans 400-410 (AQQNPQPSPEG). The stretch at 476–513 (RLEKTQIQQDLVAAREALADLMLRLQLVRREKRGLELR) forms a coiled coil. The segment at 540 to 583 (AGGANSSGGHSSGGGSSGDEEEWYQGLPAVPGGTSGIDGGQVGR) is disordered. The span at 572–581 (GTSGIDGGQV) shows a compositional bias: gly residues. Residues 596–681 (ASLTRTLDLQ…QAEEVAVLEA (86 aa)) adopt a coiled-coil conformation.

The protein belongs to the MCC family. Interacts via its C-terminus with the first PDZ domain of USH1C. Highest level of expression in heart, and moderate to low expression in skeletal muscle, kidney, liver, small intestine, placenta and lung.

In Homo sapiens (Human), this protein is Harmonin-binding protein USHBP1.